Here is a 294-residue protein sequence, read N- to C-terminus: MNGVINIYKNTGMTSFDVVAMVRRVAKMKKVGHTGTLDPAASGVLPVCLGKATKIIDYIMENKKVYRVNLKLGMVTDTYDLEGEVLREEDASHITKDEILNCINSFVGTIDQVPPMYSALKQNGVRLYELARQGIEVHREARKITIYSIENIKIESNDNIQMDVCCSKGTYIRSLCYDIGEKLNVGATMTALERIQNGTFTKEEAINIEDLTEELLEKHIISIEKALDSFEKITVNEKFGKLLRNGVKVFDNRMYSEEVEFNKLYRVYEDNGVFLGLGKRDEKGFKLEKLLIEE.

The active-site Nucleophile is Asp38.

This sequence belongs to the pseudouridine synthase TruB family. Type 1 subfamily.

It catalyses the reaction uridine(55) in tRNA = pseudouridine(55) in tRNA. Responsible for synthesis of pseudouridine from uracil-55 in the psi GC loop of transfer RNAs. The polypeptide is tRNA pseudouridine synthase B (Clostridium perfringens (strain 13 / Type A)).